Reading from the N-terminus, the 134-residue chain is Acyl carrier protein, chloroplastic (134 aa).

Residues 1–51 (MATTFSASVSTLATSLATPTRISFQKPALVSRTNLSFNLRRSIPTRLSVSC) constitute a chloroplast transit peptide. Positions 55–130 (PETIEKVSKI…EAAELIEELV (76 aa)) constitute a Carrier domain. At Ser-90 the chain carries O-(pantetheine 4'-phosphoryl)serine.

It belongs to the acyl carrier protein (ACP) family. 4'-phosphopantetheine is transferred from CoA to a specific serine of apo-ACP by acpS. This modification is essential for activity because fatty acids are bound in thioester linkage to the sulfhydryl of the prosthetic group. Seed.

It localises to the plastid. The protein localises to the chloroplast. Its pathway is lipid metabolism; fatty acid biosynthesis. In terms of biological role, carrier of the growing fatty acid chain in fatty acid biosynthesis. The chain is Acyl carrier protein, chloroplastic (ACL1.A3) from Brassica napus (Rape).